A 225-amino-acid chain; its full sequence is Late gene expression regulator BDLF4 (225 aa).

The disordered stretch occupies residues 1 to 20; that stretch reads MSDQGRLSLPRGEGGTDEPN.

It belongs to the herpesviridae UL92 family.

Part of the viral pre-initiation complex (vPIC) that is responsible for the expression of vPIC-dependent late genes. vPIC is composed of at least BcRF1 that binds the viral TATT box, BDLF3.5, BDLF4, BFRF2, BGLF3, BGLF4 and BVLF1. This Homo sapiens (Human) protein is Late gene expression regulator BDLF4.